An 825-amino-acid chain; its full sequence is Breast cancer anti-estrogen resistance protein 3 homolog (825 aa).

A2 bears the N-acetylalanine mark. Residues 31-93 (KSPLTEHRPD…PVTQDSIQES (63 aa)) are disordered. Residues S32, S78, S83, S182, and S290 each carry the phosphoserine modification. Residues 75 to 93 (HSKSPQQNSPVTQDSIQES) are compositionally biased toward polar residues. An SH2 domain is found at 154 to 253 (WYHGRIPRQV…QSGAIIFQPI (100 aa)). K334 bears the N6-methyllysine mark. 3 positions are modified to phosphoserine: S358, S363, and S375. An Omega-N-methylarginine modification is found at R442. S471 bears the Phosphoserine mark. Positions 548–818 (DPKVIAQHIL…TALSRKLEPP (271 aa)) constitute a Ras-GEF domain. Residues 744–748 (LATAR) form a mediates the interaction with BCAR1/p130CAS region.

Part of a complex comprised of PTPRA, BCAR1, BCAR3 (via SH2 domain) and SRC; the formation of the complex is dependent on integrin mediated-tyrosine phosphorylation of PTPRA. Within the complex, interacts (via SH2 domain) with PTPRA (when phosphorylated on 'Tyr-798'). Interacts (via Ras-GEF domain) with BCAR1. Interacts (via Ras-GEF domain) with NEDD9. Interacts with PTK2/FAK1. Interacts with PTPN1. Interacts (via SH2 domain) with EGFR (when tyrosine-phosphorylated). Post-translationally, phosphorylated on tyrosine residues.

The protein resides in the cytoplasm. Its subcellular location is the cell junction. It localises to the focal adhesion. Its function is as follows. Acts as an adapter protein downstream of several growth factor receptors to promote cell proliferation, migration, and redistribution of actin fibers. Specifically involved in INS/insulin signaling pathway by mediating MAPK1/ERK2-MAPK3/ERK1 activation and DNA synthesis. Promotes insulin-mediated membrane ruffling. In response to vasoconstrictor peptide EDN1, involved in the activation of RAP1 downstream of PTK2B via interaction with phosphorylated BCAR1. Inhibits cell migration and invasion via regulation of TGFB-mediated matrix digestion, actin filament rearrangement, and inhibition of invadopodia activity. May inhibit TGFB-SMAD signaling, via facilitating BCAR1 and SMAD2 and/or SMAD3 interaction. Regulates EGF-induced DNA synthesis. Required for the maintenance of ocular lens morphology and structural integrity, potentially via regulation of focal adhesion complex signaling. Acts upstream of PTPRA to regulate the localization of BCAR1 and PTPRA to focal adhesions, via regulation of SRC-mediated phosphorylation of PTPRA. Positively regulates integrin-induced tyrosine phosphorylation of BCAR1. Acts as a guanine nucleotide exchange factor (GEF) for small GTPases RALA, RAP1A and RRAS. However, in a contrasting study, lacks GEF activity towards RAP1. This chain is Breast cancer anti-estrogen resistance protein 3 homolog (BCAR3), found in Macaca fascicularis (Crab-eating macaque).